The following is an 815-amino-acid chain: cGMP-specific 3',5'-cyclic phosphodiesterase delta (815 aa).

Over 1–56 (MNEYNNDNMEQEKEKKKEEQKYKNIIKKEYFIFPRLYDKNKEIEYNKLRIHNIKEY) the chain is Cytoplasmic. The helical transmembrane segment at 57–77 (ICIHLTISLFIILIECFVFSF) threads the bilayer. Over 78–86 (NLNIKDTTY) the chain is Extracellular. Residues 87-107 (VEICVVIFSILNCLMHIVVLI) traverse the membrane as a helical segment. At 108-120 (KMYFFTSESVYTK) the chain is on the cytoplasmic side. Residues 121-141 (GVFIGYIVLNQVFQFLSLYFF) traverse the membrane as a helical segment. The Extracellular portion of the chain corresponds to 142-160 (TKRNEQSKNDIAHLKYYDN). A helical membrane pass occupies residues 161–181 (SFNLYVHFFVDSVFILCLPAL). Residues 182–183 (SF) are Cytoplasmic-facing. A helical transmembrane segment spans residues 184–204 (FLSVLFMMMFLCLNILLINMI). Topologically, residues 205 to 210 (KFNKTN) are extracellular. The N-linked (GlcNAc...) asparagine glycan is linked to asparagine 207. The helical transmembrane segment at 211-231 (YGSDIYHICLLSVVLLMFLIL) threads the bilayer. The Cytoplasmic segment spans residues 232–815 (RYMMEERNRL…FKEEIKHGKL (584 aa)). The PDEase domain maps to 384-762 (YEVEVLKNIK…QTWRLIEKNI (379 aa)). Histidine 459 acts as the Proton donor in catalysis. 459–463 (HNANH) serves as a coordination point for 3',5'-cyclic GMP. Residues histidine 463, histidine 499, aspartate 500, and aspartate 616 each coordinate a divalent metal cation. Aspartate 500, aspartate 616, and glutamine 715 together coordinate 3',5'-cyclic GMP.

The protein belongs to the cyclic nucleotide phosphodiesterase family. Requires a divalent metal cation as cofactor.

The protein localises to the membrane. The catalysed reaction is 3',5'-cyclic GMP + H2O = GMP + H(+). It functions in the pathway purine metabolism; 3',5'-cyclic GMP degradation; GMP from 3',5'-cyclic GMP: step 1/1. Functionally, specifically hydrolyzes the second messenger cGMP, which is a key regulator of many important physiological processes. Probably by regulating cGMP levels, required for activation of gametogenesis. The polypeptide is cGMP-specific 3',5'-cyclic phosphodiesterase delta (Plasmodium falciparum (isolate 3D7)).